The sequence spans 262 residues: Ribosomal RNA small subunit methyltransferase A (262 aa).

Positions 18, 43, 65, 91, and 110 each coordinate S-adenosyl-L-methionine.

The protein belongs to the class I-like SAM-binding methyltransferase superfamily. rRNA adenine N(6)-methyltransferase family. RsmA subfamily.

The protein resides in the cytoplasm. It carries out the reaction adenosine(1518)/adenosine(1519) in 16S rRNA + 4 S-adenosyl-L-methionine = N(6)-dimethyladenosine(1518)/N(6)-dimethyladenosine(1519) in 16S rRNA + 4 S-adenosyl-L-homocysteine + 4 H(+). Specifically dimethylates two adjacent adenosines (A1518 and A1519) in the loop of a conserved hairpin near the 3'-end of 16S rRNA in the 30S particle. May play a critical role in biogenesis of 30S subunits. The protein is Ribosomal RNA small subunit methyltransferase A of Ehrlichia ruminantium (strain Gardel).